The sequence spans 649 residues: Acetyl-coenzyme A synthetase (649 aa).

Residues 191–194 (RGGR), Thr311, and Asn335 contribute to the CoA site. ATP contacts are provided by residues 387 to 389 (GEP), 411 to 416 (DTWWQT), Asp500, and Arg515. Ser523 serves as a coordination point for CoA. Arg526 provides a ligand contact to ATP. Positions 537, 539, and 542 each coordinate Mg(2+). Arg584 provides a ligand contact to CoA. An N6-acetyllysine modification is found at Lys609.

It belongs to the ATP-dependent AMP-binding enzyme family. Requires Mg(2+) as cofactor. Acetylated. Deacetylation by the SIR2-homolog deacetylase activates the enzyme.

The enzyme catalyses acetate + ATP + CoA = acetyl-CoA + AMP + diphosphate. Catalyzes the conversion of acetate into acetyl-CoA (AcCoA), an essential intermediate at the junction of anabolic and catabolic pathways. AcsA undergoes a two-step reaction. In the first half reaction, AcsA combines acetate with ATP to form acetyl-adenylate (AcAMP) intermediate. In the second half reaction, it can then transfer the acetyl group from AcAMP to the sulfhydryl group of CoA, forming the product AcCoA. In Vibrio cholerae serotype O1 (strain ATCC 39315 / El Tor Inaba N16961), this protein is Acetyl-coenzyme A synthetase.